A 298-amino-acid polypeptide reads, in one-letter code: Inosose dehydratase (298 aa).

Belongs to the IolE/MocC family. Glutathione is required as a cofactor. The cofactor is Co(2+). Mn(2+) serves as cofactor.

It carries out the reaction scyllo-inosose = 3D-3,5/4-trihydroxycyclohexane-1,2-dione + H2O. The protein operates within polyol metabolism; myo-inositol degradation into acetyl-CoA; acetyl-CoA from myo-inositol: step 2/7. Functionally, catalyzes the dehydration of inosose (2-keto-myo-inositol, 2KMI or 2,4,6/3,5-pentahydroxycyclohexanone) to 3D-(3,5/4)-trihydroxycyclohexane-1,2-dione (D-2,3-diketo-4-deoxy-epi-inositol). The protein is Inosose dehydratase of Clostridium botulinum (strain Eklund 17B / Type B).